Consider the following 178-residue polypeptide: Bifunctional protein PyrR (178 aa).

Positions 99–111 match the PRPP-binding motif; it reads IIIIDDVLYTCRT.

Belongs to the purine/pyrimidine phosphoribosyltransferase family. PyrR subfamily. As to quaternary structure, homodimer and homohexamer; in equilibrium.

It catalyses the reaction UMP + diphosphate = 5-phospho-alpha-D-ribose 1-diphosphate + uracil. Its function is as follows. Regulates transcriptional attenuation of the pyrimidine nucleotide (pyr) operon by binding in a uridine-dependent manner to specific sites on pyr mRNA. This disrupts an antiterminator hairpin in the RNA and favors formation of a downstream transcription terminator, leading to a reduced expression of downstream genes. Also displays a weak uracil phosphoribosyltransferase activity which is not physiologically significant. The protein is Bifunctional protein PyrR of Clostridium beijerinckii (strain ATCC 51743 / NCIMB 8052) (Clostridium acetobutylicum).